The primary structure comprises 218 residues: Protein-L-isoaspartate O-methyltransferase (218 aa).

The active site involves S52.

The protein belongs to the methyltransferase superfamily. L-isoaspartyl/D-aspartyl protein methyltransferase family.

The protein resides in the cytoplasm. It catalyses the reaction [protein]-L-isoaspartate + S-adenosyl-L-methionine = [protein]-L-isoaspartate alpha-methyl ester + S-adenosyl-L-homocysteine. Catalyzes the methyl esterification of L-isoaspartyl residues in peptides and proteins that result from spontaneous decomposition of normal L-aspartyl and L-asparaginyl residues. It plays a role in the repair and/or degradation of damaged proteins. This chain is Protein-L-isoaspartate O-methyltransferase, found in Rhodopseudomonas palustris (strain ATCC BAA-98 / CGA009).